Consider the following 164-residue polypeptide: UPF0304 protein YfbU (164 aa).

It belongs to the UPF0304 family.

This chain is UPF0304 protein YfbU, found in Shigella flexneri.